Reading from the N-terminus, the 535-residue chain is CTP synthase (535 aa).

Residues 1-266 (MKTKFIFITG…DEQVVEKLNI (266 aa)) form an amidoligase domain region. Residue serine 14 coordinates CTP. Residue serine 14 participates in UTP binding. Residues 15-20 (SIGKGL) and aspartate 72 contribute to the ATP site. Residues aspartate 72 and glutamate 140 each coordinate Mg(2+). Residues 147–149 (DIE), 187–192 (KTKPTQ), and lysine 223 contribute to the CTP site. UTP contacts are provided by residues 187-192 (KTKPTQ) and lysine 223. A Glutamine amidotransferase type-1 domain is found at 292–534 (RIAIVGKYVN…IGASLTHRNQ (243 aa)). Residue glycine 354 participates in L-glutamine binding. Residue cysteine 381 is the Nucleophile; for glutamine hydrolysis of the active site. Residues 382-385 (LGMQ), glutamate 405, and arginine 462 contribute to the L-glutamine site. Active-site residues include histidine 507 and glutamate 509.

The protein belongs to the CTP synthase family. Homotetramer.

The catalysed reaction is UTP + L-glutamine + ATP + H2O = CTP + L-glutamate + ADP + phosphate + 2 H(+). It carries out the reaction L-glutamine + H2O = L-glutamate + NH4(+). The enzyme catalyses UTP + NH4(+) + ATP = CTP + ADP + phosphate + 2 H(+). Its pathway is pyrimidine metabolism; CTP biosynthesis via de novo pathway; CTP from UDP: step 2/2. Allosterically activated by GTP, when glutamine is the substrate; GTP has no effect on the reaction when ammonia is the substrate. The allosteric effector GTP functions by stabilizing the protein conformation that binds the tetrahedral intermediate(s) formed during glutamine hydrolysis. Inhibited by the product CTP, via allosteric rather than competitive inhibition. Catalyzes the ATP-dependent amination of UTP to CTP with either L-glutamine or ammonia as the source of nitrogen. Regulates intracellular CTP levels through interactions with the four ribonucleotide triphosphates. The chain is CTP synthase from Trichlorobacter lovleyi (strain ATCC BAA-1151 / DSM 17278 / SZ) (Geobacter lovleyi).